A 406-amino-acid polypeptide reads, in one-letter code: Inner kinetochore subunit OKP1 (406 aa).

Disordered regions lie at residues 1–37 (MAADRDNFLQNIENDSINNGQAMDLSPNRSSSESDSS) and 59–122 (TQSK…TSGE). The segment covering 8 to 21 (FLQNIENDSINNGQ) has biased composition (polar residues). Over residues 26-37 (SPNRSSSESDSS) the composition is skewed to low complexity. Acidic residues predominate over residues 69-78 (NSDDAEEGEI). S70 carries the post-translational modification Phosphoserine. Basic and acidic residues-rich tracts occupy residues 79–89 (EERTNKEEGQY) and 97–106 (LRFEVGKEST). The segment covering 107–122 (GKLQSHLSDGSATSGE) has biased composition (polar residues). Residues 239 to 285 (SKRQFIQNRYSQELQNNERLEAILSREQNLLEETRKLCMNLKTNNKK) are a coiled coil. The interval 317–340 (MHPDGPVTFRNDSHELNLMLNDPI) is CTF19-MCM21 binding motif. The interaction with NKP1-NKP2 stretch occupies residues 353–400 (VLSLLPSLKEYTKKSKELKETMGQMISDSHEEEIKEVFVPHHESHQDK). The disordered stretch occupies residues 379–406 (SDSHEEEIKEVFVPHHESHQDKTEEDIH). A compositionally biased stretch (basic and acidic residues) spans 380–406 (DSHEEEIKEVFVPHHESHQDKTEEDIH).

Belongs to the CENP-Q/OKP1 family. Component of the heterotetrameric kinetochore subcomplex COMA, which consists of AME1, CTF19, MCM21 and OKP1. The COMA subcomplex is part of a larger constitutive centromere-associated network (CCAN) (also known as central kinetochore CTF19 complex in yeast), which is composed of at least AME1, CHL4, CNN1, CTF3, CTF19, IML3, MCM16, MCM21, MCM22, MHF1, MHF2, MIF2, NKP1, NKP2, OKP1 and WIP1. COMA binds the centromeric nucleosome-binding protein MIF2, and to the outer kinetochore MIND subcomplex. OKP1 interacts directly with AME1, with an NKP1-NKP2 dimer, and with CTF19-MCM21.

The protein localises to the nucleus. It is found in the chromosome. It localises to the centromere. Its subcellular location is the kinetochore. Component of the kinetochore, a multiprotein complex that assembles on centromeric DNA and attaches chromosomes to spindle microtubules, mediating chromosome segregation and sister chromatid segregation during meiosis and mitosis. Component of the inner kinetochore COMA complex, which connects centromere-associated proteins and the outer kinetochore. COMA interacts with other inner kinetochore proteins to form the inner kinetochore constitutive centromere-associated network (CCAN), which serves as a structural platform for outer kinetochore assembly. In Saccharomyces cerevisiae (strain ATCC 204508 / S288c) (Baker's yeast), this protein is Inner kinetochore subunit OKP1.